A 420-amino-acid polypeptide reads, in one-letter code: Exodeoxyribonuclease 7 large subunit (420 aa).

The protein belongs to the XseA family. As to quaternary structure, heterooligomer composed of large and small subunits.

It localises to the cytoplasm. It carries out the reaction Exonucleolytic cleavage in either 5'- to 3'- or 3'- to 5'-direction to yield nucleoside 5'-phosphates.. In terms of biological role, bidirectionally degrades single-stranded DNA into large acid-insoluble oligonucleotides, which are then degraded further into small acid-soluble oligonucleotides. This is Exodeoxyribonuclease 7 large subunit from Helicobacter pylori (strain Shi470).